We begin with the raw amino-acid sequence, 264 residues long: Anamorsin homolog 2 (264 aa).

Positions 1 to 142 are N-terminal SAM-like domain; that stretch reads MAATAAALAV…KVSWSMGSSF (142 aa). Residues 143-174 form a linker region; it reads PLKKATKGLPKIQIDDDSELIDEDSLLTEDDL. [2Fe-2S] cluster-binding residues include Cys-185, Cys-194, Cys-197, and Cys-199. The interval 185–199 is fe-S binding site A; the sequence is CEVGATRKACKNCTC. [4Fe-4S] cluster is bound by residues Cys-225, Cys-228, Cys-236, and Cys-239. 2 consecutive short sequence motifs (cx2C motif) follow at residues 225 to 228 and 236 to 239; these read CGNC and CGTC. Residues 225 to 239 are fe-S binding site B; sequence CGNCGLGDAFRCGTC.

The protein belongs to the anamorsin family. Monomer. [2Fe-2S] cluster is required as a cofactor. [4Fe-4S] cluster serves as cofactor.

It is found in the cytoplasm. It localises to the mitochondrion intermembrane space. Component of the cytosolic iron-sulfur (Fe-S) protein assembly (CIA) machinery. Required for the maturation of extramitochondrial Fe-S proteins. Part of an electron transfer chain functioning in an early step of cytosolic Fe-S biogenesis, facilitating the de novo assembly of a [4Fe-4S] cluster on the cytosolic Fe-S scaffold complex. Electrons are transferred from NADPH via a FAD- and FMN-containing diflavin oxidoreductase. Together with the diflavin oxidoreductase, also required for the assembly of the diferric tyrosyl radical cofactor of ribonucleotide reductase (RNR), probably by providing electrons for reduction during radical cofactor maturation in the catalytic small subunit. The sequence is that of Anamorsin homolog 2 from Oryza sativa subsp. indica (Rice).